The following is a 102-amino-acid chain: NADH-quinone oxidoreductase subunit K (102 aa).

The next 3 membrane-spanning stretches (helical) occupy residues M6–I26, L30–V50, and I65–L85.

Belongs to the complex I subunit 4L family. In terms of assembly, NDH-1 is composed of 14 different subunits. Subunits NuoA, H, J, K, L, M, N constitute the membrane sector of the complex.

The protein resides in the cell inner membrane. It carries out the reaction a quinone + NADH + 5 H(+)(in) = a quinol + NAD(+) + 4 H(+)(out). NDH-1 shuttles electrons from NADH, via FMN and iron-sulfur (Fe-S) centers, to quinones in the respiratory chain. The immediate electron acceptor for the enzyme in this species is believed to be ubiquinone. Couples the redox reaction to proton translocation (for every two electrons transferred, four hydrogen ions are translocated across the cytoplasmic membrane), and thus conserves the redox energy in a proton gradient. The sequence is that of NADH-quinone oxidoreductase subunit K from Aeromonas salmonicida (strain A449).